Reading from the N-terminus, the 331-residue chain is D-alanine--D-alanine ligase (331 aa).

The ATP-grasp domain occupies 121 to 327 (KLWYDALGIP…FSQFLENCVR (207 aa)). Residue 151 to 206 (AFESWGKVFVKAARQGSSVGCYQVNQVEELSEAINKAFTFSDQVLIEKSVVPRELE) participates in ATP binding. Positions 281, 294, and 296 each coordinate Mg(2+).

This sequence belongs to the D-alanine--D-alanine ligase family. It depends on Mg(2+) as a cofactor. Requires Mn(2+) as cofactor.

It localises to the cytoplasm. It carries out the reaction 2 D-alanine + ATP = D-alanyl-D-alanine + ADP + phosphate + H(+). It functions in the pathway cell wall biogenesis; peptidoglycan biosynthesis. Cell wall formation. This chain is D-alanine--D-alanine ligase, found in Vibrio atlanticus (strain LGP32) (Vibrio splendidus (strain Mel32)).